A 184-amino-acid polypeptide reads, in one-letter code: MARVFHVAEKVEIPENVAVEVDGLRVTVKGPKGIITRDFSHARGVFIRLEDRVVIVETFVADRKQKALVGTIAAHIRNMITGVVRGYRYKLKIIFSHFPITVSVDEKNKVVRIRNFMGEKSDRIAKIYGNVKVKVSGEDIIIEGVDIEEVGLTAASIERATRVTDRDRRVFMDGIYIYEKGEAL.

It belongs to the universal ribosomal protein uL6 family. Part of the 50S ribosomal subunit.

In terms of biological role, this protein binds to the 23S rRNA, and is important in its secondary structure. It is located near the subunit interface in the base of the L7/L12 stalk, and near the tRNA binding site of the peptidyltransferase center. The protein is Large ribosomal subunit protein uL6 of Desulfurococcus amylolyticus (strain DSM 18924 / JCM 16383 / VKM B-2413 / 1221n) (Desulfurococcus kamchatkensis).